The sequence spans 507 residues: Maturase K (507 aa).

This sequence belongs to the intron maturase 2 family. MatK subfamily.

It localises to the plastid. The protein localises to the chloroplast. Its function is as follows. Usually encoded in the trnK tRNA gene intron. Probably assists in splicing its own and other chloroplast group II introns. The chain is Maturase K from Ranunculus acris (Meadow buttercup).